A 136-amino-acid chain; its full sequence is MAKFIKSGKVAIVVRGRYAGKKVVIVKPHDEGTKSHPFPHAIVAGIERAPLKVTKKMDAKKVTKRTKVKPFVKLVNYNHLMPTRYSLDVESFKSAVTSEALEEPSQREEAKKVVKKAFEEKHQAGKNKWFFQKLHF.

The protein belongs to the eukaryotic ribosomal protein eL27 family.

This chain is Large ribosomal subunit protein eL27 (RPL27), found in Candida albicans (Yeast).